Here is a 474-residue protein sequence, read N- to C-terminus: Vitamin D-binding protein (474 aa).

An N-terminal signal peptide occupies residues 1–16 (MKRILVFLLAVAFVHA). 3 consecutive Albumin domains span residues 17–208 (LERG…QLKH), 209–393 (FSLL…QLTR), and 394–474 (ELSS…TLQS). 2 disulfides stabilise this stretch: Cys29/Cys75 and Cys74/Cys83. Asn86 is a glycosylation site (N-linked (GlcNAc...) asparagine). 12 cysteine pairs are disulfide-bonded: Cys96–Cys112, Cys111–Cys122, Cys145–Cys190, Cys189–Cys198, Cys220–Cys266, Cys265–Cys273, Cys285–Cys299, Cys298–Cys310, Cys334–Cys375, Cys374–Cys383, Cys406–Cys452, and Cys451–Cys461. N-linked (GlcNAc...) asparagine glycosylation occurs at Asn287.

This sequence belongs to the ALB/AFP/VDB family. As to quaternary structure, associates with membrane-bound immunoglobulin on the surface of B-lymphocytes and with IgG Fc receptor on the membranes of T-lymphocytes. Interacts with LRP2; the interaction is required for renal uptake of GC in complex with 25-hydroxyvitamin D3.

The protein localises to the secreted. Its function is as follows. Involved in vitamin D transport and storage, scavenging of extracellular G-actin, enhancement of the chemotactic activity of C5 alpha for neutrophils in inflammation and macrophage activation. The sequence is that of Vitamin D-binding protein (GC) from Bos taurus (Bovine).